A 731-amino-acid polypeptide reads, in one-letter code: Radial spoke head 10 homolog B (731 aa).

The interval 1 to 69 (MARGDNMKSS…PNENQPIGEH (69 aa)) is disordered. Over residues 7-17 (MKSSNKSTPEP) the composition is skewed to polar residues. Low complexity-rich tracts occupy residues 18–36 (TLSK…SESV) and 46–57 (SSSAVCSASTVS). 10 MORN repeats span residues 86 to 108 (YEGE…GGHV), 109 to 131 (YKGS…DGLK), 132 to 154 (YQGD…NGST), 155 to 177 (YEGE…KTLT), 179 to 201 (YRGQ…QEAT), 204 to 226 (YKGE…SGNV), 227 to 249 (YEGQ…DLDQ), 251 to 273 (YSGQ…RKRA), 284 to 306 (YTGD…SGAL), and 307 to 329 (YCGQ…NGRV). Disordered regions lie at residues 353-377 (TTPF…SPLG) and 709-731 (KQEQ…TSIH). The span at 363-377 (SKGASQSSSNASPLG) shows a compositional bias: low complexity. Over residues 722 to 731 (VTTTSVTSIH) the composition is skewed to polar residues.

The protein localises to the cytoplasm. The protein resides in the cytoskeleton. It localises to the cilium axoneme. Its subcellular location is the cell projection. It is found in the cilium. The protein localises to the flagellum. In terms of biological role, may function as part of axonemal radial spoke complexes. Radial spoke complexes are important for ciliary motility. This Danio rerio (Zebrafish) protein is Radial spoke head 10 homolog B (rsph10b).